Reading from the N-terminus, the 379-residue chain is Alternative oxidase 1, mitochondrial (379 aa).

The segment covering 33–50 has biased composition (low complexity); sequence TTTTSTKSRSSTSTAATT. Residues 33–76 are disordered; sequence TTTTSTKSRSSTSTAATTVGNSNPKSPIDEDNLEKPGTIPTKHK. The Fe cation site is built by E180, E219, and H222. A helical membrane pass occupies residues 234 to 256; the sequence is WFTRSIIYIGQGVFTNIFFLVYL. Fe cation contacts are provided by E270, E271, E326, and H329.

Belongs to the alternative oxidase family. Fe cation serves as cofactor.

The protein localises to the mitochondrion inner membrane. Functionally, catalyzes cyanide-resistant oxygen consumption. May increase respiration when the cytochrome respiratory pathway is restricted, or in response to low temperatures. This Candida albicans (Yeast) protein is Alternative oxidase 1, mitochondrial (AOX1).